Here is a 434-residue protein sequence, read N- to C-terminus: Serine/threonine-protein kinase Sgk1-A (434 aa).

Residues 66–94 (PQEPELLNENSSPPPSPSQQINLGPSSNP) form a disordered region. Residues 84–94 (QQINLGPSSNP) show a composition bias toward polar residues. A Protein kinase domain is found at 101–358 (FQFLKIIGKG…FMEIKNHIFF (258 aa)). Residues 107–115 (IGKGSFGKV) and Lys-130 contribute to the ATP site. Residue Asp-225 is the Proton acceptor of the active site. Residues 359 to 434 (SPINWDDLIN…SYAPPMESYL (76 aa)) form the AGC-kinase C-terminal domain.

It belongs to the protein kinase superfamily. AGC Ser/Thr protein kinase family.

Its subcellular location is the cytoplasm. The protein resides in the nucleus. It is found in the endoplasmic reticulum. The catalysed reaction is L-seryl-[protein] + ATP = O-phospho-L-seryl-[protein] + ADP + H(+). It catalyses the reaction L-threonyl-[protein] + ATP = O-phospho-L-threonyl-[protein] + ADP + H(+). Protein kinase that may play an important role in cellular stress response. Plays an important role in activating certain potassium, sodium, and chloride channels, suggesting an involvement in the regulation of processes such as cell survival, neuronal excitability, and renal sodium excretion. This Xenopus laevis (African clawed frog) protein is Serine/threonine-protein kinase Sgk1-A (sgk1-a).